Reading from the N-terminus, the 398-residue chain is Acetate kinase (398 aa).

A Mg(2+)-binding site is contributed by N8. An ATP-binding site is contributed by K15. R89 provides a ligand contact to substrate. D146 serves as the catalytic Proton donor/acceptor. Residues 206-210, 281-283, and 329-333 contribute to the ATP site; these read HIGNG, DLR, and GVGEN. E383 is a binding site for Mg(2+).

Belongs to the acetokinase family. In terms of assembly, homodimer. Requires Mg(2+) as cofactor. It depends on Mn(2+) as a cofactor.

It localises to the cytoplasm. It catalyses the reaction acetate + ATP = acetyl phosphate + ADP. The protein operates within metabolic intermediate biosynthesis; acetyl-CoA biosynthesis; acetyl-CoA from acetate: step 1/2. In terms of biological role, catalyzes the formation of acetyl phosphate from acetate and ATP. Can also catalyze the reverse reaction. The protein is Acetate kinase of Macrococcus caseolyticus (strain JCSC5402) (Macrococcoides caseolyticum).